We begin with the raw amino-acid sequence, 127 residues long: uncharacterized protein (127 aa).

Residues 1–16 form the signal peptide; that stretch reads MLKKIIFGITISLTTG. Residue cysteine 17 is the site of N-palmitoyl cysteine attachment. Cysteine 17 carries the S-diacylglycerol cysteine lipid modification. Residues 56–101 adopt a coiled-coil conformation; sequence EVREEIQKYRVEIVDINKKKRELYNRLSKEAQSFLAEQQKYKQKLS. Positions 102 to 127 are disordered; the sequence is IPKLLIENDPKNNTANSKDNNDKDMK.

It is found in the cell membrane. This is an uncharacterized protein from Rickettsia prowazekii (strain Madrid E).